The primary structure comprises 161 residues: Cyclic pyranopterin monophosphate synthase (161 aa).

Substrate contacts are provided by residues 75-77 (LCH) and 113-114 (ME). Asp128 is an active-site residue.

It belongs to the MoaC family. As to quaternary structure, homohexamer; trimer of dimers.

The enzyme catalyses (8S)-3',8-cyclo-7,8-dihydroguanosine 5'-triphosphate = cyclic pyranopterin phosphate + diphosphate. Its pathway is cofactor biosynthesis; molybdopterin biosynthesis. Its function is as follows. Catalyzes the conversion of (8S)-3',8-cyclo-7,8-dihydroguanosine 5'-triphosphate to cyclic pyranopterin monophosphate (cPMP). In Edwardsiella ictaluri (strain 93-146), this protein is Cyclic pyranopterin monophosphate synthase.